The chain runs to 98 residues: NADH-ubiquinone oxidoreductase chain 4L (98 aa).

3 helical membrane passes run 1-21 (MTSISLNLIMAFSLALAGVLI), 28-48 (STLLCLEGMMLSLFILMALLI), and 59-79 (APLILLVFSACEAGVGLALLV).

Belongs to the complex I subunit 4L family. As to quaternary structure, core subunit of respiratory chain NADH dehydrogenase (Complex I) which is composed of 45 different subunits.

It is found in the mitochondrion inner membrane. The catalysed reaction is a ubiquinone + NADH + 5 H(+)(in) = a ubiquinol + NAD(+) + 4 H(+)(out). Functionally, core subunit of the mitochondrial membrane respiratory chain NADH dehydrogenase (Complex I) which catalyzes electron transfer from NADH through the respiratory chain, using ubiquinone as an electron acceptor. Part of the enzyme membrane arm which is embedded in the lipid bilayer and involved in proton translocation. The protein is NADH-ubiquinone oxidoreductase chain 4L (MT-ND4L) of Vombatus ursinus (Common wombat).